The primary structure comprises 275 residues: Large ribosomal subunit protein uL2 (275 aa).

2 disordered regions span residues 222–243 and 256–275; these read GSVM…PIGR and GGKT…KRKP.

This sequence belongs to the universal ribosomal protein uL2 family. As to quaternary structure, part of the 50S ribosomal subunit. Forms a bridge to the 30S subunit in the 70S ribosome.

In terms of biological role, one of the primary rRNA binding proteins. Required for association of the 30S and 50S subunits to form the 70S ribosome, for tRNA binding and peptide bond formation. It has been suggested to have peptidyltransferase activity; this is somewhat controversial. Makes several contacts with the 16S rRNA in the 70S ribosome. The protein is Large ribosomal subunit protein uL2 of Syntrophomonas wolfei subsp. wolfei (strain DSM 2245B / Goettingen).